The sequence spans 61 residues: Small ribosomal subunit protein uS14 (61 aa).

Positions 24, 27, 40, and 43 each coordinate Zn(2+).

The protein belongs to the universal ribosomal protein uS14 family. Zinc-binding uS14 subfamily. As to quaternary structure, part of the 30S ribosomal subunit. Contacts proteins S3 and S10. The cofactor is Zn(2+).

Functionally, binds 16S rRNA, required for the assembly of 30S particles and may also be responsible for determining the conformation of the 16S rRNA at the A site. This is Small ribosomal subunit protein uS14 from Halothermothrix orenii (strain H 168 / OCM 544 / DSM 9562).